A 362-amino-acid chain; its full sequence is Prostaglandin F2-alpha receptor (362 aa).

Residues 1–31 (MSTNNSVQPVSPASELLSNTTCQLEEDLSIS) are Extracellular-facing. Residues asparagine 4 and asparagine 19 are each glycosylated (N-linked (GlcNAc...) asparagine). The helical transmembrane segment at 32–54 (FSIIFMTVGILSNSLAIAILMKA) threads the bilayer. Over 55–69 (YQRFRQKYKSSFLLL) the chain is Cytoplasmic. The helical transmembrane segment at 70–90 (ASALVITDFFGHLINGTIAVF) threads the bilayer. The Extracellular portion of the chain corresponds to 91–109 (VYASDKDWIYFDKSNILCS). A disulfide bridge connects residues cysteine 108 and cysteine 186. Residues 110–131 (IFGICMVFSGLCPLFLGSLMAI) traverse the membrane as a helical segment. Residues 132-152 (ERCIGVTKPIFHSTKITTKHV) lie on the Cytoplasmic side of the membrane. Residues 153–175 (KMMLSGVCFFAVFVALLPILGHR) traverse the membrane as a helical segment. Residues 176-198 (DYKIQASRTWCFYKTDQIKDWED) lie on the Extracellular side of the membrane. The helical transmembrane segment at 199-224 (RFYLLLFAFLGLLALGISFVCNAITG) threads the bilayer. The Cytoplasmic portion of the chain corresponds to 225–250 (ISLLKVKFRSQQHRQGRSHHFEMVIQ). A helical membrane pass occupies residues 251–267 (LLGIMCVSCICWSPFLV). The Extracellular portion of the chain corresponds to 268-285 (TMASIGMNIQDFKDSCER). A helical transmembrane segment spans residues 286-307 (TLFTLRMATWNQILDPWVYILL). Residues 308–362 (RKAVLRNLYVCTRRCCGVHVISLHVWELSSIKNSLKVAAISDLPVTEKVTQQTST) lie on the Cytoplasmic side of the membrane.

Belongs to the G-protein coupled receptor 1 family.

The protein localises to the cell membrane. In terms of biological role, receptor for prostaglandin F2-alpha (PGF2-alpha). The activity of this receptor is mediated by G proteins which activate a phosphatidylinositol-calcium second messenger system. Initiates luteolysis in the corpus luteum. In Ovis aries (Sheep), this protein is Prostaglandin F2-alpha receptor (PTGFR).